The primary structure comprises 103 residues: Histone H4 (103 aa).

Residues 1–14 (MTGRGKGGKGLGKG) are compositionally biased toward gly residues. Positions 1 to 20 (MTGRGKGGKGLGKGGAKRHR) are disordered. Residue K6 is modified to N6-acetyl-N6-methyllysine; alternate. K6, K9, and K13 each carry N6-methyllysine; alternate. K13 is subject to N6-acetyl-N6-methyllysine; alternate. A DNA-binding region spans residues 17 to 21 (KRHRK). At K92 the chain carries N6-glutaryllysine.

It belongs to the histone H4 family. The nucleosome is a histone octamer containing two molecules each of H2A, H2B, H3 and H4 assembled in one H3-H4 heterotetramer and two H2A-H2B heterodimers. The octamer wraps approximately 147 bp of DNA. In terms of processing, glutarylation at Lys-92 (H4K91glu) destabilizes nucleosomes by promoting dissociation of the H2A-H2B dimers from nucleosomes.

The protein localises to the nucleus. It is found in the chromosome. Core component of nucleosome. Nucleosomes wrap and compact DNA into chromatin, limiting DNA accessibility to the cellular machineries which require DNA as a template. Histones thereby play a central role in transcription regulation, DNA repair, DNA replication and chromosomal stability. DNA accessibility is regulated via a complex set of post-translational modifications of histones, also called histone code, and nucleosome remodeling. In Neurospora crassa (strain ATCC 24698 / 74-OR23-1A / CBS 708.71 / DSM 1257 / FGSC 987), this protein is Histone H4 (hH4-1).